The following is a 348-amino-acid chain: Anthranilate phosphoribosyltransferase (348 aa).

5-phospho-alpha-D-ribose 1-diphosphate contacts are provided by residues glycine 81, 84-85 (GD), threonine 89, 91-94 (NIST), 109-117 (KHGNRSSSG), and serine 121. Residue glycine 81 coordinates anthranilate. Serine 93 contacts Mg(2+). An anthranilate-binding site is contributed by asparagine 112. Anthranilate is bound at residue arginine 167. Mg(2+) contacts are provided by aspartate 226 and glutamate 227.

This sequence belongs to the anthranilate phosphoribosyltransferase family. Homodimer. Requires Mg(2+) as cofactor.

The catalysed reaction is N-(5-phospho-beta-D-ribosyl)anthranilate + diphosphate = 5-phospho-alpha-D-ribose 1-diphosphate + anthranilate. It functions in the pathway amino-acid biosynthesis; L-tryptophan biosynthesis; L-tryptophan from chorismate: step 2/5. Its function is as follows. Catalyzes the transfer of the phosphoribosyl group of 5-phosphorylribose-1-pyrophosphate (PRPP) to anthranilate to yield N-(5'-phosphoribosyl)-anthranilate (PRA). This Nitrosopumilus maritimus (strain SCM1) protein is Anthranilate phosphoribosyltransferase.